The following is a 218-amino-acid chain: uncharacterized protein (218 aa).

5 helical membrane-spanning segments follow: residues 27-49 (IALE…GFLA), 57-77 (GGVL…GYWV), 115-135 (VFFG…AGIV), 142-162 (FLLY…SLAY), and 180-200 (FSWF…VFHF).

It belongs to the DedA family.

The protein localises to the cell membrane. This is an uncharacterized protein from Synechocystis sp. (strain ATCC 27184 / PCC 6803 / Kazusa).